The primary structure comprises 421 residues: ATP-dependent RNA helicase RhlB (421 aa).

Residues Gln-9 to Ala-37 carry the Q motif motif. Positions Leu-40–Val-219 constitute a Helicase ATP-binding domain. Ala-53–Thr-60 is a binding site for ATP. The short motif at Asp-165 to Asp-168 is the DEAD box element. Residues Arg-245–Met-390 form the Helicase C-terminal domain. Positions Pro-396–Gly-421 are disordered. A compositionally biased stretch (low complexity) spans Ser-402 to Pro-414.

The protein belongs to the DEAD box helicase family. RhlB subfamily. Component of the RNA degradosome, which is a multiprotein complex involved in RNA processing and mRNA degradation.

The protein localises to the cytoplasm. It catalyses the reaction ATP + H2O = ADP + phosphate + H(+). Its function is as follows. DEAD-box RNA helicase involved in RNA degradation. Has RNA-dependent ATPase activity and unwinds double-stranded RNA. The chain is ATP-dependent RNA helicase RhlB from Salmonella dublin (strain CT_02021853).